The following is a 305-amino-acid chain: Dermonecrotic toxin LiSicTox-alphaIA2aiii (305 aa).

The signal sequence occupies residues 1 to 17; it reads LPYIALILVCWSVLSQA. A propeptide spanning residues 18 to 25 is cleaved from the precursor; that stretch reads AQTDVEER. The active site involves His37. 2 residues coordinate Mg(2+): Glu57 and Asp59. The active-site Nucleophile is His73. 2 disulfides stabilise this stretch: Cys77-Cys83 and Cys79-Cys222. Asp117 contacts Mg(2+). An N-linked (GlcNAc...) asparagine glycan is attached at Asn282.

The protein belongs to the arthropod phospholipase D family. Class II subfamily. It depends on Mg(2+) as a cofactor. In terms of tissue distribution, expressed by the venom gland.

The protein localises to the secreted. It carries out the reaction an N-(acyl)-sphingosylphosphocholine = an N-(acyl)-sphingosyl-1,3-cyclic phosphate + choline. It catalyses the reaction an N-(acyl)-sphingosylphosphoethanolamine = an N-(acyl)-sphingosyl-1,3-cyclic phosphate + ethanolamine. The enzyme catalyses a 1-acyl-sn-glycero-3-phosphocholine = a 1-acyl-sn-glycero-2,3-cyclic phosphate + choline. The catalysed reaction is a 1-acyl-sn-glycero-3-phosphoethanolamine = a 1-acyl-sn-glycero-2,3-cyclic phosphate + ethanolamine. In terms of biological role, dermonecrotic toxins cleave the phosphodiester linkage between the phosphate and headgroup of certain phospholipids (sphingolipid and lysolipid substrates), forming an alcohol (often choline) and a cyclic phosphate. This toxin acts on sphingomyelin (SM). It may also act on ceramide phosphoethanolamine (CPE), lysophosphatidylcholine (LPC) and lysophosphatidylethanolamine (LPE), but not on lysophosphatidylserine (LPS), and lysophosphatidylglycerol (LPG). It acts by transphosphatidylation, releasing exclusively cyclic phosphate products as second products. Induces dermonecrosis, hemolysis, increased vascular permeability, edema, inflammatory response, and platelet aggregation. This is Dermonecrotic toxin LiSicTox-alphaIA2aiii from Loxosceles intermedia (Brown spider).